Consider the following 451-residue polypeptide: UBP1-associated protein 2B (451 aa).

Residues 1-86 form a disordered region; that stretch reads MTKKRKLESE…GNEDDDEEEP (86 aa). 2 stretches are compositionally biased toward basic and acidic residues: residues 25–38 and 49–63; these read CEKE…VDNQ and DTLK…KGED. Polar residues predominate over residues 67–77; sequence AETSSGSGNQG. 2 consecutive RRM domains span residues 128–236 and 227–314; these read RKIF…NVSA and RKIY…QHQH. Disordered regions lie at residues 302 to 335 and 423 to 451; these read ANDG…GYGA and GGYQ…YMGR. Residues 431 to 451 show a composition bias toward gly residues; the sequence is GQGGAGRGQHGAGYGGPYMGR.

In terms of tissue distribution, expressed in shoot meristem and flowers.

It is found in the nucleus. Functionally, heterogeneous nuclear ribonucleoprotein (hnRNP)-like protein that acts as a component of a complex regulating the turnover of mRNAs in the nucleus. Binds with high affinity to RNA molecules that contain U-rich sequences in 3'-UTRs. May function in complex with UBP1 and contribute to the stabilization of mRNAs in the nucleus. This is UBP1-associated protein 2B (UBA2B) from Arabidopsis thaliana (Mouse-ear cress).